The primary structure comprises 290 residues: MEIKSIKKLKLYGFNNLTKTLSFNMYDICYAKTPEHRKAYIEYIDEEYNSERLTNILIEVANIIGANILNIAKQDYDPQGASVTMLISEGKVEQDVENGQGNGNAIGSATDCDNGDGKAGEDCALLIPNAVAAHLDKSHITVHTYPESHPDKGISTFRADIDVSTCGMISPLKALNYLINSFSSDIVIADYRVRGFTRDVSGKKYFIDHKINSIQNYIAKETRELYQMIDVNVYQDNIFHTKMLLKEFDLDNYLFGTAKKELLPGEKKKIKQRLKKEMYEIFSGRNIPKV.

S138 acts as the Schiff-base intermediate with substrate; via pyruvic acid in catalysis. S138 is subject to Pyruvic acid (Ser); by autocatalysis. H143 serves as the catalytic Proton acceptor; for processing activity. The active-site Proton donor; for catalytic activity is the C166.

This sequence belongs to the prokaryotic AdoMetDC family. Type 2 subfamily. Heterooctamer of four alpha and four beta chains arranged as a tetramer of alpha/beta heterodimers. Requires pyruvate as cofactor. Post-translationally, is synthesized initially as an inactive proenzyme. Formation of the active enzyme involves a self-maturation process in which the active site pyruvoyl group is generated from an internal serine residue via an autocatalytic post-translational modification. Two non-identical subunits are generated from the proenzyme in this reaction, and the pyruvate is formed at the N-terminus of the alpha chain, which is derived from the carboxyl end of the proenzyme. The post-translation cleavage follows an unusual pathway, termed non-hydrolytic serinolysis, in which the side chain hydroxyl group of the serine supplies its oxygen atom to form the C-terminus of the beta chain, while the remainder of the serine residue undergoes an oxidative deamination to produce ammonia and the pyruvoyl group blocking the N-terminus of the alpha chain.

It carries out the reaction S-adenosyl-L-methionine + H(+) = S-adenosyl 3-(methylsulfanyl)propylamine + CO2. Its pathway is amine and polyamine biosynthesis; S-adenosylmethioninamine biosynthesis; S-adenosylmethioninamine from S-adenosyl-L-methionine: step 1/1. In terms of biological role, catalyzes the decarboxylation of S-adenosylmethionine to S-adenosylmethioninamine (dcAdoMet), the propylamine donor required for the synthesis of the polyamines spermine and spermidine from the diamine putrescine. In Heliobacterium modesticaldum (strain ATCC 51547 / Ice1), this protein is S-adenosylmethionine decarboxylase proenzyme.